A 358-amino-acid chain; its full sequence is Phosphoserine aminotransferase (358 aa).

Arg-43 is an L-glutamate binding site. Trp-103, Thr-153, Asp-172, and Gln-195 together coordinate pyridoxal 5'-phosphate. Lys-196 carries the post-translational modification N6-(pyridoxal phosphate)lysine. 236–237 serves as a coordination point for pyridoxal 5'-phosphate; sequence NT.

Belongs to the class-V pyridoxal-phosphate-dependent aminotransferase family. SerC subfamily. Homodimer. It depends on pyridoxal 5'-phosphate as a cofactor.

Its subcellular location is the cytoplasm. The catalysed reaction is O-phospho-L-serine + 2-oxoglutarate = 3-phosphooxypyruvate + L-glutamate. The enzyme catalyses 4-(phosphooxy)-L-threonine + 2-oxoglutarate = (R)-3-hydroxy-2-oxo-4-phosphooxybutanoate + L-glutamate. It functions in the pathway amino-acid biosynthesis; L-serine biosynthesis; L-serine from 3-phospho-D-glycerate: step 2/3. Its pathway is cofactor biosynthesis; pyridoxine 5'-phosphate biosynthesis; pyridoxine 5'-phosphate from D-erythrose 4-phosphate: step 3/5. Functionally, catalyzes the reversible conversion of 3-phosphohydroxypyruvate to phosphoserine and of 3-hydroxy-2-oxo-4-phosphonooxybutanoate to phosphohydroxythreonine. The protein is Phosphoserine aminotransferase of Dichelobacter nodosus (strain VCS1703A).